The primary structure comprises 199 residues: Protein CPL1 (199 aa).

Residues 1 to 30 (MFSIPPSVRRLVFLFLIAAPLLSIVLPVAA) form the signal peptide. A disordered region spans residues 34–58 (GVDPPSKLQPRAPQPSRRMGATKRS). Residue Asn-148 is glycosylated (N-linked (GlcNAc...) asparagine).

The protein localises to the secreted. Functionally, virulence factor which promotes fungal virulence by enhancing type 2 inflammation in the mouse host. Likely binds mouse Tlr4 independently of Ly96/Md2 and activates Tlr4 signaling to drive Stat3 phosphorylation in interstitial macrophages, which promotes the initial induction of Arg1/arginase-1 and increases macrophage sensitivity to Il4 signaling. The polypeptide is Protein CPL1 (Cryptococcus neoformans var. grubii serotype A (strain H99 / ATCC 208821 / CBS 10515 / FGSC 9487) (Filobasidiella neoformans var. grubii)).